The sequence spans 167 residues: Probable D-lyxose ketol-isomerase (167 aa).

The Mn(2+) site is built by H69, H71, E82, and H137.

The protein belongs to the D-lyxose ketol-isomerase family. In terms of assembly, homodimer. Mn(2+) serves as cofactor.

It catalyses the reaction D-lyxose = D-xylulose. Functionally, sugar isomerase that catalyzes the reversible isomerization of D-lyxose to D-xylulose. This chain is Probable D-lyxose ketol-isomerase (ydaE), found in Bacillus subtilis (strain 168).